A 172-amino-acid chain; its full sequence is Small ribosomal subunit protein uS13c (172 aa).

Residues 1 to 47 constitute a chloroplast transit peptide; the sequence is MAHTLATPVAPSVSLICNTKLSVSLSSSSLAFRPVNPKNGGGLSIKC.

Component of the chloroplast small ribosomal subunit (SSU). Mature 70S chloroplast ribosomes of higher plants consist of a small (30S) and a large (50S) subunit. The 30S small subunit contains 1 molecule of ribosomal RNA (16S rRNA) and 24 different proteins. The 50S large subunit contains 3 rRNA molecules (23S, 5S and 4.5S rRNA) and 33 different proteins. uS13c interacts with translation factor pY (PSRP1).

It localises to the plastid. The protein resides in the chloroplast. Functionally, component of the chloroplast ribosome (chloro-ribosome), a dedicated translation machinery responsible for the synthesis of chloroplast genome-encoded proteins, including proteins of the transcription and translation machinery and components of the photosynthetic apparatus. The polypeptide is Small ribosomal subunit protein uS13c (RPS13) (Spinacia oleracea (Spinach)).